The following is a 159-amino-acid chain: Putative ribosomal RNA large subunit methyltransferase H (159 aa).

S-adenosyl-L-methionine-binding positions include leucine 76, glycine 108, and 127–132; that span reads FSKMTF.

Belongs to the RNA methyltransferase RlmH family.

The protein resides in the cytoplasm. It carries out the reaction pseudouridine(1915) in 23S rRNA + S-adenosyl-L-methionine = N(3)-methylpseudouridine(1915) in 23S rRNA + S-adenosyl-L-homocysteine + H(+). In terms of biological role, specifically methylates the pseudouridine at position 1915 (m3Psi1915) in 23S rRNA. The chain is Putative ribosomal RNA large subunit methyltransferase H from Methanococcus maripaludis (strain C5 / ATCC BAA-1333).